Consider the following 57-residue polypeptide: Potassium channel toxin KTx1 (57 aa).

The N-terminal stretch at 1–13 is a signal peptide; sequence FLVLLLVSLMCYA. The propeptide occupies 14 to 18; sequence EIAEG. 3 disulfides stabilise this stretch: cysteine 24–cysteine 37, cysteine 30–cysteine 42, and cysteine 36–cysteine 51.

This sequence belongs to the scorpion calcin-like family. KTX subfamily. In terms of tissue distribution, expressed by the venom gland.

Its subcellular location is the secreted. This recombinant peptide inhibits voltage-gated potassium channels mKv1.3/KCNA3 (IC(50)=1.70 uM), mKv1.1/KCNA1 (10 uM inhibits 40% of currents) and hKv1.2/KCNA2 (10 uM inhibits 42% of currents). May also increase intracellular calcium release through the activation of nuclear inositol 1,4,5-trisphosphate receptors (ITPR) of cardiomyocytes, thereby causing an increase in the contraction frequency of these cells. This Isometrus maculatus (Lesser brown scorpion) protein is Potassium channel toxin KTx1.